We begin with the raw amino-acid sequence, 282 residues long: E3 ubiquitin-protein ligase RNF217 (282 aa).

A TRIAD supradomain region spans residues 1 to 218 (MSCRVCLEDR…LSIFGCKYRY (218 aa)). Residues Cys3, Cys6, Cys23, Cys26, Cys123, Cys126, His131, Cys136, Cys163, and Cys166 each coordinate Zn(2+). An RING-type 1 zinc finger spans residues 3-49 (CRVCLEDRSIKPLPCCKKPVCDECLKRYLSSQVQLGQAEIQCPITEC). The IBR-type zinc finger occupies 68 to 136 (IKYKYFLELS…HAPWHEGVNC (69 aa)). The RING-type 2; atypical zinc-finger motif lies at 163-192 (CPRCKVHIQRTEGCDHMTCSQCNTNFCYRC). Cys176 is a catalytic residue. 6 residues coordinate Zn(2+): Cys181, Cys184, Cys189, Cys192, His205, and Cys214. A helical membrane pass occupies residues 243-263 (LLIVLGLVLGALAVVIGLFGL).

Belongs to the RBR family. RNF217 subfamily.

It localises to the cytoplasm. Its subcellular location is the membrane. The catalysed reaction is [E2 ubiquitin-conjugating enzyme]-S-ubiquitinyl-L-cysteine + [acceptor protein]-L-lysine = [E2 ubiquitin-conjugating enzyme]-L-cysteine + [acceptor protein]-N(6)-ubiquitinyl-L-lysine.. Its pathway is protein modification; protein ubiquitination. In terms of biological role, E3 ubiquitin-protein ligase which accepts ubiquitin from E2 ubiquitin-conjugating enzymes in the form of a thioester and then directly transfers the ubiquitin to targeted substrates. Mediates the degradation of the iron exporter ferroportin/SLC40A1 and thus regulates iron homeostasis. This is E3 ubiquitin-protein ligase RNF217 (rnf217) from Xenopus laevis (African clawed frog).